The following is a 152-amino-acid chain: Ribosome maturation factor RimP (152 aa).

Belongs to the RimP family.

The protein localises to the cytoplasm. In terms of biological role, required for maturation of 30S ribosomal subunits. This Paraburkholderia phymatum (strain DSM 17167 / CIP 108236 / LMG 21445 / STM815) (Burkholderia phymatum) protein is Ribosome maturation factor RimP.